A 217-amino-acid chain; its full sequence is RNA chaperone ProQ (217 aa).

Residues 105-166 (EAKARVQAQR…PREEQHTPVS (62 aa)) form a disordered region. The segment covering 121-131 (KRERKPRPTTP) has biased composition (basic residues). The span at 132-162 (RRKEGAERKPRAQKPVEKAPKTVKAPREEQH) shows a compositional bias: basic and acidic residues.

This sequence belongs to the ProQ family.

It is found in the cytoplasm. In terms of biological role, RNA chaperone with significant RNA binding, RNA strand exchange and RNA duplexing activities. May regulate ProP activity through an RNA-based, post-transcriptional mechanism. In Escherichia coli O8 (strain IAI1), this protein is RNA chaperone ProQ.